Reading from the N-terminus, the 198-residue chain is MPHESRVGRRRSTTPHHISDVAIELFAAHGFTDVSVDDIARAAGIARRTLFRYYASKNAIPWGDFSTHLAQLQGLLDNIDSRIQLRDALRAALLAFNTFDESETIRHRKRMRVILQTPELQAYSMTMYAGWREVIAKFVARRSGGKTTDFMPQTVAWTMLGVALSAYEHWLRDESVSLTEALGAAFDVVGAGLDRLNQ.

Residues 12-72 enclose the HTH tetR-type domain; it reads STTPHHISDV…GDFSTHLAQL (61 aa). A DNA-binding region (H-T-H motif) is located at residues 35-54; that stretch reads SVDDIARAAGIARRTLFRYY.

Its function is as follows. May regulate a gene cluster involved in mycofactocin expression. Mycofactocin is a conserved polypeptide that might serve as an electron carrier. The sequence is that of Putative mycofactocin biosynthesis transcriptional regulator MftR (mftR) from Mycobacterium tuberculosis (strain ATCC 25618 / H37Rv).